A 732-amino-acid chain; its full sequence is Elongation factor 2 (732 aa).

The region spanning 19–230 (ERIRNMGIAA…VSFKDIIDLT (212 aa)) is the tr-type G domain. Residues 28 to 35 (AHIDHGKT), 94 to 98 (DTPGH), and 148 to 151 (NKVD) contribute to the GTP site. Diphthamide is present on His-597.

This sequence belongs to the TRAFAC class translation factor GTPase superfamily. Classic translation factor GTPase family. EF-G/EF-2 subfamily.

Its subcellular location is the cytoplasm. Functionally, catalyzes the GTP-dependent ribosomal translocation step during translation elongation. During this step, the ribosome changes from the pre-translocational (PRE) to the post-translocational (POST) state as the newly formed A-site-bound peptidyl-tRNA and P-site-bound deacylated tRNA move to the P and E sites, respectively. Catalyzes the coordinated movement of the two tRNA molecules, the mRNA and conformational changes in the ribosome. The chain is Elongation factor 2 from Thermococcus sibiricus (strain DSM 12597 / MM 739).